The chain runs to 493 residues: Argininosuccinate lyase (493 aa).

Belongs to the lyase 1 family. Argininosuccinate lyase subfamily.

It is found in the cytoplasm. It catalyses the reaction 2-(N(omega)-L-arginino)succinate = fumarate + L-arginine. It participates in amino-acid biosynthesis; L-arginine biosynthesis; L-arginine from L-ornithine and carbamoyl phosphate: step 3/3. This is Argininosuccinate lyase from Methanospirillum hungatei JF-1 (strain ATCC 27890 / DSM 864 / NBRC 100397 / JF-1).